The following is a 427-amino-acid chain: 3-phosphoshikimate 1-carboxyvinyltransferase (427 aa).

Residues lysine 20, serine 21, and arginine 25 each coordinate 3-phosphoshikimate. A phosphoenolpyruvate-binding site is contributed by lysine 20. Positions 92 and 120 each coordinate phosphoenolpyruvate. Serine 166, glutamine 168, aspartate 312, and lysine 339 together coordinate 3-phosphoshikimate. Glutamine 168 is a phosphoenolpyruvate binding site. The active-site Proton acceptor is aspartate 312. Arginine 343 and arginine 385 together coordinate phosphoenolpyruvate.

The protein belongs to the EPSP synthase family. As to quaternary structure, monomer.

It localises to the cytoplasm. The enzyme catalyses 3-phosphoshikimate + phosphoenolpyruvate = 5-O-(1-carboxyvinyl)-3-phosphoshikimate + phosphate. Its pathway is metabolic intermediate biosynthesis; chorismate biosynthesis; chorismate from D-erythrose 4-phosphate and phosphoenolpyruvate: step 6/7. Catalyzes the transfer of the enolpyruvyl moiety of phosphoenolpyruvate (PEP) to the 5-hydroxyl of shikimate-3-phosphate (S3P) to produce enolpyruvyl shikimate-3-phosphate and inorganic phosphate. This Streptococcus pneumoniae serotype 2 (strain D39 / NCTC 7466) protein is 3-phosphoshikimate 1-carboxyvinyltransferase.